A 343-amino-acid chain; its full sequence is Ferredoxin--NADP reductase (343 aa).

Residues Cys-18, Asp-37, Gln-45, Tyr-50, Val-90, Phe-125, Asp-290, and Thr-331 each contribute to the FAD site.

It belongs to the ferredoxin--NADP reductase type 2 family. Homodimer. FAD is required as a cofactor.

It catalyses the reaction 2 reduced [2Fe-2S]-[ferredoxin] + NADP(+) + H(+) = 2 oxidized [2Fe-2S]-[ferredoxin] + NADPH. This chain is Ferredoxin--NADP reductase, found in Parvibaculum lavamentivorans (strain DS-1 / DSM 13023 / NCIMB 13966).